The sequence spans 353 residues: Heat-inducible transcription repressor HrcA (353 aa).

This sequence belongs to the HrcA family.

In terms of biological role, negative regulator of class I heat shock genes (grpE-dnaK-dnaJ and groELS operons). Prevents heat-shock induction of these operons. The sequence is that of Heat-inducible transcription repressor HrcA from Synechococcus elongatus (strain ATCC 33912 / PCC 7942 / FACHB-805) (Anacystis nidulans R2).